A 382-amino-acid chain; its full sequence is MEYQLLKTDGQARRGRLVFDRGVVETPAFMPVGTYGTVKGMTPEEVKETGAQILLGNTFHLWLRPGQAVMKLHGDLHDFMQWHGPILTDSGGFQVFSLGDIRKITEEGVYFRNPINGDTIFLSPEKSMEIQYDLGSDIVMIFDECTSYPSDWDYAKQSMEMSLRWAARSRQRFDELGNHNALFGIIQGSVYEDLRDVSVKRLVEIGFDGYAVGGLAVGEPKADMHRILAHLCPQIPADKPRYLMGVGKPEDLVEGVRRGIDMFDCVMPTRNARNGHLFVTDGVVKIRNARYKDDVAPLDAECDCYTCRNYSRAYLHHLDRCNEILGARLNTIHNLRYYQRLMAGLRQAIDEGKLEHFVGEFYRRTGKPAPPLVVELHNNEGI.

The Proton acceptor role is filled by Asp-89. Substrate-binding positions include 89–93 (DSGGF), Asp-143, Gln-187, and Gly-214. Residues 245 to 251 (GVGKPED) are RNA binding. Asp-264 (nucleophile) is an active-site residue. The segment at 269 to 273 (TRNAR) is RNA binding; important for wobble base 34 recognition. Zn(2+) contacts are provided by Cys-302, Cys-304, Cys-307, and His-333.

It belongs to the queuine tRNA-ribosyltransferase family. As to quaternary structure, homodimer. Within each dimer, one monomer is responsible for RNA recognition and catalysis, while the other monomer binds to the replacement base PreQ1. Requires Zn(2+) as cofactor.

It carries out the reaction 7-aminomethyl-7-carbaguanine + guanosine(34) in tRNA = 7-aminomethyl-7-carbaguanosine(34) in tRNA + guanine. It functions in the pathway tRNA modification; tRNA-queuosine biosynthesis. Functionally, catalyzes the base-exchange of a guanine (G) residue with the queuine precursor 7-aminomethyl-7-deazaguanine (PreQ1) at position 34 (anticodon wobble position) in tRNAs with GU(N) anticodons (tRNA-Asp, -Asn, -His and -Tyr). Catalysis occurs through a double-displacement mechanism. The nucleophile active site attacks the C1' of nucleotide 34 to detach the guanine base from the RNA, forming a covalent enzyme-RNA intermediate. The proton acceptor active site deprotonates the incoming PreQ1, allowing a nucleophilic attack on the C1' of the ribose to form the product. After dissociation, two additional enzymatic reactions on the tRNA convert PreQ1 to queuine (Q), resulting in the hypermodified nucleoside queuosine (7-(((4,5-cis-dihydroxy-2-cyclopenten-1-yl)amino)methyl)-7-deazaguanosine). In Sodalis glossinidius (strain morsitans), this protein is Queuine tRNA-ribosyltransferase.